Reading from the N-terminus, the 236-residue chain is 5'-methylthioadenosine/S-adenosylhomocysteine nucleosidase (236 aa).

The active-site Proton acceptor is Glu-12. Residues Gly-78, Ile-153, and Met-174–Glu-175 each bind substrate. The active-site Proton donor is Asp-198.

The protein belongs to the PNP/UDP phosphorylase family. MtnN subfamily.

The catalysed reaction is S-adenosyl-L-homocysteine + H2O = S-(5-deoxy-D-ribos-5-yl)-L-homocysteine + adenine. It carries out the reaction S-methyl-5'-thioadenosine + H2O = 5-(methylsulfanyl)-D-ribose + adenine. It catalyses the reaction 5'-deoxyadenosine + H2O = 5-deoxy-D-ribose + adenine. It participates in amino-acid biosynthesis; L-methionine biosynthesis via salvage pathway; S-methyl-5-thio-alpha-D-ribose 1-phosphate from S-methyl-5'-thioadenosine (hydrolase route): step 1/2. Catalyzes the irreversible cleavage of the glycosidic bond in both 5'-methylthioadenosine (MTA) and S-adenosylhomocysteine (SAH/AdoHcy) to adenine and the corresponding thioribose, 5'-methylthioribose and S-ribosylhomocysteine, respectively. Also cleaves 5'-deoxyadenosine, a toxic by-product of radical S-adenosylmethionine (SAM) enzymes, into 5-deoxyribose and adenine. The sequence is that of 5'-methylthioadenosine/S-adenosylhomocysteine nucleosidase from Shewanella baltica (strain OS155 / ATCC BAA-1091).